The chain runs to 311 residues: tRNA-cytidine(32) 2-sulfurtransferase (311 aa).

The PP-loop motif motif lies at 47 to 52; it reads SGGKDS. Residues C122, C125, and C213 each contribute to the [4Fe-4S] cluster site.

The protein belongs to the TtcA family. As to quaternary structure, homodimer. Requires Mg(2+) as cofactor. It depends on [4Fe-4S] cluster as a cofactor.

It is found in the cytoplasm. It catalyses the reaction cytidine(32) in tRNA + S-sulfanyl-L-cysteinyl-[cysteine desulfurase] + AH2 + ATP = 2-thiocytidine(32) in tRNA + L-cysteinyl-[cysteine desulfurase] + A + AMP + diphosphate + H(+). The protein operates within tRNA modification. Catalyzes the ATP-dependent 2-thiolation of cytidine in position 32 of tRNA, to form 2-thiocytidine (s(2)C32). The sulfur atoms are provided by the cysteine/cysteine desulfurase (IscS) system. The protein is tRNA-cytidine(32) 2-sulfurtransferase of Escherichia coli O139:H28 (strain E24377A / ETEC).